Consider the following 108-residue polypeptide: Nucleoid-associated protein PSPTO_3645 (108 aa).

The span at 85 to 96 (QASQDKTASMTA) shows a compositional bias: polar residues. Residues 85-108 (QASQDKTASMTAGMQLPPGMKLPF) are disordered.

The protein belongs to the YbaB/EbfC family. Homodimer.

Its subcellular location is the cytoplasm. It localises to the nucleoid. Binds to DNA and alters its conformation. May be involved in regulation of gene expression, nucleoid organization and DNA protection. This Pseudomonas syringae pv. tomato (strain ATCC BAA-871 / DC3000) protein is Nucleoid-associated protein PSPTO_3645.